Consider the following 436-residue polypeptide: Chaperone protein dnaJ 16 (436 aa).

The region spanning 20–85 (DPYEVLGVLR…EKRRQFDSAG (66 aa)) is the J domain. Positions 291 to 348 (TQEKEDLRSVEAQILTKRAELAKFETEYREVLVQFTDMTSRYAQEMQSIDELLKQRNE) form a coiled coil. The tract at residues 360-416 (KRSSSKNRMRKSSFKKAAAKAPAPTEQEEEEEEEEEEEEESSRQKNKKPSTCDKSET) is disordered. The segment covering 362–377 (SSSKNRMRKSSFKKAA) has biased composition (basic residues). The span at 385-399 (EQEEEEEEEEEEEEE) shows a compositional bias: acidic residues.

It belongs to the DnaJ family. B/II subfamily. In terms of tissue distribution, expressed constitutively in seedlings, roots, leaves, stems, flowers and siliques.

It is found in the membrane. Functionally, plays a continuous role in plant development probably in the structural organization of compartments. Seems to not be involved in gravitropism signaling pathway. The protein is Chaperone protein dnaJ 16 (ATJ16) of Arabidopsis thaliana (Mouse-ear cress).